The following is a 185-amino-acid chain: Small ribosomal subunit protein uS7 (185 aa).

It belongs to the universal ribosomal protein uS7 family. As to quaternary structure, part of the 30S ribosomal subunit.

One of the primary rRNA binding proteins, it binds directly to 16S rRNA where it nucleates assembly of the head domain of the 30S subunit. Is located at the subunit interface close to the decoding center. The protein is Small ribosomal subunit protein uS7 of Methanothrix thermoacetophila (strain DSM 6194 / JCM 14653 / NBRC 101360 / PT) (Methanosaeta thermophila).